Consider the following 345-residue polypeptide: Anthranilate phosphoribosyltransferase (345 aa).

Residues G86, 89–90 (GD), T94, 96–99 (NIST), 114–122 (KHGNRNLSS), and A126 contribute to the 5-phospho-alpha-D-ribose 1-diphosphate site. G86 contacts anthranilate. S98 lines the Mg(2+) pocket. Anthranilate is bound at residue N117. R172 lines the anthranilate pocket. Residues D231 and E232 each coordinate Mg(2+).

The protein belongs to the anthranilate phosphoribosyltransferase family. As to quaternary structure, homodimer. It depends on Mg(2+) as a cofactor.

It carries out the reaction N-(5-phospho-beta-D-ribosyl)anthranilate + diphosphate = 5-phospho-alpha-D-ribose 1-diphosphate + anthranilate. It participates in amino-acid biosynthesis; L-tryptophan biosynthesis; L-tryptophan from chorismate: step 2/5. In terms of biological role, catalyzes the transfer of the phosphoribosyl group of 5-phosphorylribose-1-pyrophosphate (PRPP) to anthranilate to yield N-(5'-phosphoribosyl)-anthranilate (PRA). The sequence is that of Anthranilate phosphoribosyltransferase from Jannaschia sp. (strain CCS1).